A 176-amino-acid chain; its full sequence is Sigma intracellular receptor 2 (176 aa).

Over 1 to 9 (MGAPATRRC) the chain is Cytoplasmic. Residues 10-30 (VEWLLGLYFLSHIPITLFMDL) form a helical membrane-spanning segment. Residues 10–158 (VEWLLGLYFL…PYLLIPFILL (149 aa)) form the EXPERA domain. Topologically, residues 31 to 68 (QAVLPRELYPVEFRNLLKWYAKEFKDPLLQEPPAWFKS) are lumenal. The helical transmembrane segment at 69–89 (FLFCELVFQLPFFPIATYAFL) threads the bilayer. The cholesterol site is built by Val-75 and Gln-77. The Cytoplasmic portion of the chain corresponds to 90–99 (KGSCKWIRTP). A helical membrane pass occupies residues 100–120 (AIIYSVHTMTTLIPILSTFLF). The segment at 108–176 (MTTLIPILST…YKYEEKRKKK (69 aa)) is required for interaction with Hst1/HTN1. Residues 121-140 (EDFSKASGFKGQRPETLHER) are Lumenal-facing. The chain crosses the membrane as a helical span at residues 141 to 161 (LTLVSVYAPYLLIPFILLIFM). Residues 162 to 176 (LRSPYYKYEEKRKKK) lie on the Cytoplasmic side of the membrane. The short motif at 172-176 (KRKKK) is the ER retention motif element.

It belongs to the TMEM97/sigma-2 receptor family. In terms of assembly, homodimer. Interacts with NPC1; the interaction impairs NPC1-mediated cholesterol transport. Interacts with PGRMC1 and LDLR; the interaction increases LDL internalization. Interacts with histatin 1/HTN1; the interaction induces HTN1-stimulating wound healing. Interacts with TSPO. Forms a complex with TSPO and PGRMC1; the interaction occurs in MIA PaCa-2 cells but not in MCF7 cells. As to expression, widely expressed in normal tissues. Expressed in pancreatic, renal, breast, colon, ovarian surface epithelial (OSE) cells. Highly expressed in various proliferating cancer cells.

It localises to the rough endoplasmic reticulum membrane. Its subcellular location is the nucleus membrane. Its function is as follows. Sigma-2 receptor which contributes to ameliorate dysfunctional cellular processes and slow degenerative progression by regulating cell functions including cholesterol biosynthesis/trafficking, membrane trafficking, autophagy, lipid membrane-bound protein trafficking, and receptor stabilization at the cell surface. Forms a ternary complex with PGRMC1 receptor and low density lipoprotein receptor/LDLR at the plasma membrane, which increases LDLR-mediated LDL cholesterol internalization. Decreases lysosomal sterol transporter NPC1 availability to the cell, probably through NPC1-binding, hence controlling lipid transport, including cholesterol and LBPA, outside of late endosome/lysosome. Binds regio- and stereoselective ligand 20(S)-hydroxycholesterol (20(S)-OHC) which enhances TMEM97-NPC1 interaction and decreases TMEM97-PGRMC1 and TMEM97-TSPO interactions, thereby linking OHC binding to cholesterol homeostasis. Also able to bind cholesterol. Binds histatin 1 (Hst 1)/HN1 salivary peptide at the ER membrane, which is critical for increasing mitochondria-ER contacts and stimulating Hst1 wound healing properties. May alter the activity of some cytochrome P450 proteins. Although shows homologies with sterol isomerases (EXPERA domain), not able to catalyze sterol isomerization. However, may act as sensors of these molecules. Acts as a quality control factor in the ER, promoting the proteolytic degradation of nonproductive and extramitochondrial precursor proteins in the ER membrane thus removing them from the ER surface. This is Sigma intracellular receptor 2 from Homo sapiens (Human).